The sequence spans 447 residues: Probable rhamnogalacturonase C (447 aa).

Residues 1–19 (MQVKLFYTLALWAPILVSA) form the signal peptide. N-linked (GlcNAc...) asparagine glycosylation is found at Asn37 and Asn65. Cys40 and Cys66 are oxidised to a cystine. The active-site Proton donor is Asp217. Cys219 and Cys236 form a disulfide bridge. N-linked (GlcNAc...) asparagine glycans are attached at residues Asn237 and Asn252. The active site involves His291. Asn316 carries N-linked (GlcNAc...) asparagine glycosylation. Intrachain disulfides connect Cys338–Cys344 and Cys366–Cys375.

It belongs to the glycosyl hydrolase 28 family.

Its subcellular location is the secreted. Pectinolytic enzymes consist of four classes of enzymes: pectine lyase, polygalacturonase, pectin methylesterase and rhamnogalacturonase. Hydrolyzes alpha-D-galacturonopyranosyl-(1,2)-alpha-L-rhamnopyranosyl linkages in the backbone of the hairy regions of pectins. The sequence is that of Probable rhamnogalacturonase C (rhgC) from Aspergillus flavus (strain ATCC 200026 / FGSC A1120 / IAM 13836 / NRRL 3357 / JCM 12722 / SRRC 167).